The sequence spans 1074 residues: DNA-directed RNA polymerase subunit beta (1074 aa).

It belongs to the RNA polymerase beta chain family. As to quaternary structure, in plastids the minimal PEP RNA polymerase catalytic core is composed of four subunits: alpha, beta, beta', and beta''. When a (nuclear-encoded) sigma factor is associated with the core the holoenzyme is formed, which can initiate transcription.

The protein localises to the plastid. It is found in the chloroplast. It carries out the reaction RNA(n) + a ribonucleoside 5'-triphosphate = RNA(n+1) + diphosphate. Functionally, DNA-dependent RNA polymerase catalyzes the transcription of DNA into RNA using the four ribonucleoside triphosphates as substrates. This Chara vulgaris (Common stonewort) protein is DNA-directed RNA polymerase subunit beta.